Here is a 196-residue protein sequence, read N- to C-terminus: dTTP/UTP pyrophosphatase (196 aa).

Residue aspartate 73 is the Proton acceptor of the active site.

This sequence belongs to the Maf family. YhdE subfamily. A divalent metal cation serves as cofactor.

Its subcellular location is the cytoplasm. The catalysed reaction is dTTP + H2O = dTMP + diphosphate + H(+). It carries out the reaction UTP + H2O = UMP + diphosphate + H(+). Functionally, nucleoside triphosphate pyrophosphatase that hydrolyzes dTTP and UTP. May have a dual role in cell division arrest and in preventing the incorporation of modified nucleotides into cellular nucleic acids. The polypeptide is dTTP/UTP pyrophosphatase (Myxococcus xanthus (strain DK1622)).